A 979-amino-acid polypeptide reads, in one-letter code: Putative cellulose synthase-like protein D6 (979 aa).

The interval 1–24 is disordered; sequence MMDGESPLRHPRISHVSNSGSDFG. Residues 14 to 24 are compositionally biased toward low complexity; sequence SHVSNSGSDFG. 2 helical membrane-spanning segments follow: residues 116–136 and 147–167; these read IIIALYRILIVVRVVSLALFL and ALWLWLLSVICELWFAFSWLL. Residues Asp247 and Asp683 contribute to the active site. The next 6 helical transmembrane spans lie at 765–785, 788–808, 837–857, 882–902, 913–933, and 946–966; these read IFILTYCFLPPLSLFSGHFVV, LTGSFLIYLLIITLSLCGLAV, LVAVLQGILKVIAGVEISFTL, ALMIPPLTIIILNIVAILFAV, WSNLLGGTFFASWVLLHMYPF, and TVVYVWSGLIAICLSLLYITI.

It belongs to the glycosyltransferase 2 family. Plant cellulose synthase-like D subfamily.

The protein resides in the golgi apparatus membrane. In terms of biological role, thought to be a Golgi-localized beta-glycan synthase that polymerize the backbones of noncellulosic polysaccharides (hemicelluloses) of plant cell wall. The sequence is that of Putative cellulose synthase-like protein D6 (CSLD6) from Arabidopsis thaliana (Mouse-ear cress).